Here is a 166-residue protein sequence, read N- to C-terminus: Phospholipase A2 inhibitor B1 (166 aa).

Positions 1 to 19 are cleaved as a signal peptide; it reads MRLILLSGLLLLGTFLVNG. The region spanning 46–161 is the C-type lectin domain; the sequence is LFHAFLTVHK…CDDNLLVVCE (116 aa). 2 disulfides stabilise this stretch: Cys-83–Cys-160 and Cys-138–Cys-152. Residue Asn-122 is glycosylated (N-linked (GlcNAc...) asparagine).

The protein belongs to the alpha-type phospholipase A2 inhibitor family. In terms of assembly, homotrimer; non-covalently linked. In terms of tissue distribution, expressed by the liver.

The protein resides in the secreted. Functionally, this phospholipase A2 inhibitor binds directly phospholipase A2 in the presence or absence of calcium. The sequence is that of Phospholipase A2 inhibitor B1 from Crotalus durissus terrificus (South American rattlesnake).